The sequence spans 337 residues: Glyceraldehyde-3-phosphate dehydrogenase 3, cytosolic (337 aa).

NAD(+) is bound by residues 13 to 14 (RI), D35, and R82. Residues 153–155 (SCT), T184, 213–214 (TG), and R236 each bind D-glyceraldehyde 3-phosphate. The active-site Nucleophile is the C154. N318 is an NAD(+) binding site.

The protein belongs to the glyceraldehyde-3-phosphate dehydrogenase family. In terms of assembly, homotetramer.

The protein localises to the cytoplasm. The catalysed reaction is D-glyceraldehyde 3-phosphate + phosphate + NAD(+) = (2R)-3-phospho-glyceroyl phosphate + NADH + H(+). Its pathway is carbohydrate degradation; glycolysis; pyruvate from D-glyceraldehyde 3-phosphate: step 1/5. Functionally, key enzyme in glycolysis that catalyzes the first step of the pathway by converting D-glyceraldehyde 3-phosphate (G3P) into 3-phospho-D-glyceroyl phosphate. Essential for the maintenance of cellular ATP levels and carbohydrate metabolism. This chain is Glyceraldehyde-3-phosphate dehydrogenase 3, cytosolic (GAPC3), found in Oryza sativa subsp. japonica (Rice).